Reading from the N-terminus, the 221-residue chain is Uracil-DNA glycosylase 1 (221 aa).

Residue Asp-61 is the Proton acceptor of the active site.

Belongs to the uracil-DNA glycosylase (UDG) superfamily. UNG family.

It localises to the cytoplasm. It catalyses the reaction Hydrolyzes single-stranded DNA or mismatched double-stranded DNA and polynucleotides, releasing free uracil.. Excises uracil residues from the DNA which can arise as a result of misincorporation of dUMP residues by DNA polymerase or due to deamination of cytosine. The polypeptide is Uracil-DNA glycosylase 1 (Listeria monocytogenes serovar 1/2a (strain ATCC BAA-679 / EGD-e)).